A 289-amino-acid polypeptide reads, in one-letter code: Rhodopsin (289 aa).

Residues Tyr-1 to Gly-7 are Extracellular-facing. Residues Tyr-8–Val-32 traverse the membrane as a helical segment. The Cytoplasmic segment spans residues Thr-33 to Asn-44. A helical membrane pass occupies residues Tyr-45–Tyr-67. Over Thr-68–Cys-81 the chain is Extracellular. Cys-81 and Cys-158 form a disulfide bridge. The chain crosses the membrane as a helical span at residues Asn-82 to Ile-104. The 'Ionic lock' involved in activated form stabilization signature appears at Glu-105 to Trp-107. At Glu-105–His-123 the chain is on the cytoplasmic side. A helical transmembrane segment spans residues Ala-124–Ala-144. The Extracellular segment spans residues Gly-145 to Ser-173. Asn-171 is a glycosylation site (N-linked (GlcNAc...) asparagine). Residues Phe-174 to Gly-195 traverse the membrane as a helical segment. The Cytoplasmic portion of the chain corresponds to Arg-196–Arg-223. A helical membrane pass occupies residues Met-224–Trp-245. At Ile-246–Ile-257 the chain is on the extracellular side. Residues Phe-258–Cys-279 traverse the membrane as a helical segment. Lys-267 bears the N6-(retinylidene)lysine mark. Residues Met-280–Ile-289 are Cytoplasmic-facing.

Belongs to the G-protein coupled receptor 1 family. Opsin subfamily. Post-translationally, phosphorylated on some or all of the serine and threonine residues present in the C-terminal region. In terms of processing, contains one covalently linked retinal chromophore.

The protein resides in the membrane. The protein localises to the cell projection. It is found in the cilium. Its subcellular location is the photoreceptor outer segment. In terms of biological role, photoreceptor required for image-forming vision at low light intensity. While most salt water fish species use retinal as chromophore, most freshwater fish use 3-dehydroretinal, or a mixture of retinal and 3-dehydroretinal. Light-induced isomerization of 11-cis to all-trans retinal triggers a conformational change that activates signaling via G-proteins. Subsequent receptor phosphorylation mediates displacement of the bound G-protein alpha subunit by arrestin and terminates signaling. The protein is Rhodopsin (rho) of Limnocottus pallidus (Ray-finned fish).